A 388-amino-acid chain; its full sequence is Muscleblind-like protein 1 (388 aa).

Threonine 6 carries the phosphothreonine modification. 4 C3H1-type zinc fingers span residues tryptophan 13–lysine 41, asparagine 47–proline 73, threonine 179–aspartate 207, and aspartate 215–alanine 241.

This sequence belongs to the muscleblind family. As to quaternary structure, interacts with DDX1 and YBX1. Interacts with HNRNPH1; the interaction in RNA-independent. Interacts with RBPMS; the interaction allows cooperative assembly of RNA-bound stable cell-specific alternative splicing regulatory complexes. Highly expressed in cardiac, skeletal muscle and during myoblast differentiation. Weakly expressed in other tissues (at protein level). Expressed in heart, brain, placenta, lung, liver, skeletal muscle, kidney and pancreas.

It localises to the nucleus. Its subcellular location is the cytoplasm. The protein resides in the cytoplasmic granule. Mediates pre-mRNA alternative splicing regulation. Acts either as activator or repressor of splicing on specific pre-mRNA targets. Inhibits cardiac troponin-T (TNNT2) pre-mRNA exon inclusion but induces insulin receptor (IR) pre-mRNA exon inclusion in muscle. Antagonizes the alternative splicing activity pattern of CELF proteins. Regulates the TNNT2 exon 5 skipping through competition with U2AF2. Inhibits the formation of the spliceosome A complex on intron 4 of TNNT2 pre-mRNA. Binds to the stem-loop structure within the polypyrimidine tract of TNNT2 intron 4 during spliceosome assembly. Binds to the 5'-YGCU(U/G)Y-3'consensus sequence. Binds to the IR RNA. Binds to expanded CUG repeat RNA, which folds into a hairpin structure containing GC base pairs and bulged, unpaired U residues. Together with RNA binding proteins RBPMS and RBFOX2, activates vascular smooth muscle cells alternative splicing events. Regulates NCOR2 alternative splicing. The chain is Muscleblind-like protein 1 (MBNL1) from Homo sapiens (Human).